A 156-amino-acid polypeptide reads, in one-letter code: Single-stranded DNA-binding protein 1 (156 aa).

The SSB domain maps to 1-107 (MNETMICAVG…IDAVAIGHDL (107 aa)). Residues 114–124 (FRRTARTEAST) are compositionally biased toward low complexity. The disordered stretch occupies residues 114-156 (FRRTARTEASTSPPRPEPNWEVPAGGTPGEPVPEQRPDPVPVG).

Homotetramer.

This Streptomyces coelicolor (strain ATCC BAA-471 / A3(2) / M145) protein is Single-stranded DNA-binding protein 1 (ssb1).